Consider the following 259-residue polypeptide: Bidirectional sugar transporter SWEET4 (259 aa).

At 1–10 the chain is on the extracellular side; it reads MVSPDTIRTA. The region spanning 10-94 is the MtN3/slv 1 domain; sequence AIGVVGNGTA…TYIALFLAFS (85 aa). The helical transmembrane segment at 11–31 threads the bilayer; the sequence is IGVVGNGTALVLFLSPVPTFI. Topologically, residues 32-44 are cytoplasmic; it reads RIWKKGSVEQYSA. The chain crosses the membrane as a helical span at residues 45 to 65; sequence VPYVATLLNCMMWVLYGLPAV. At 66–77 the chain is on the extracellular side; sequence HPHSMLVITING. Residue Asn-76 is glycosylated (N-linked (GlcNAc...) asparagine). A helical membrane pass occupies residues 78–98; that stretch reads TGMAIELTYIALFLAFSLGAV. The Cytoplasmic segment spans residues 99–101; sequence RRR. The chain crosses the membrane as a helical span at residues 102-122; the sequence is VLLLLAAEVAFVAAVAALVLN. Topologically, residues 123–131 are extracellular; it reads LAHTHERRS. Residues 132–152 traverse the membrane as a helical segment; the sequence is MIVGILCVLFGTGMYAAPLSV. In terms of domain architecture, MtN3/slv 2 spans 133-217; that stretch reads IVGILCVLFG…ILYAIYYKST (85 aa). Residues 153–165 are Cytoplasmic-facing; that stretch reads MKMVIQTKSVEYM. The chain crosses the membrane as a helical span at residues 166–186; sequence PLFLSLASLVNGICWTAYALI. Residues 187-191 lie on the Extracellular side of the membrane; the sequence is RFDLY. A helical membrane pass occupies residues 192–212; sequence ITIPNGLGVMFAVAQLILYAI. Over 213 to 259 the chain is Cytoplasmic; the sequence is YYKSTQQIIEARKRKEADHVAMTDVVVDSAKNNPSSGAAAAAANGRY.

The protein belongs to the SWEET sugar transporter family. As to quaternary structure, forms homooligomers and/or heterooligomers.

The protein localises to the cell membrane. Functionally, mediates both low-affinity uptake and efflux of sugar across the plasma membrane. The protein is Bidirectional sugar transporter SWEET4 (SWEET4) of Oryza sativa subsp. indica (Rice).